Consider the following 474-residue polypeptide: tRNA-2-methylthio-N(6)-dimethylallyladenosine synthase (474 aa).

The region spanning 3–120 (KKLHIKTWGC…LPEMIEQVRR (118 aa)) is the MTTase N-terminal domain. [4Fe-4S] cluster-binding residues include Cys-12, Cys-49, Cys-83, Cys-157, Cys-161, and Cys-164. The Radical SAM core domain maps to 143 to 375 (RAEGPTAFVS…QDRITQQAMR (233 aa)). The TRAM domain occupies 378–441 (RHMMGTVQRI…TNSLRGVFIR (64 aa)).

It belongs to the methylthiotransferase family. MiaB subfamily. Monomer. [4Fe-4S] cluster is required as a cofactor.

It localises to the cytoplasm. It carries out the reaction N(6)-dimethylallyladenosine(37) in tRNA + (sulfur carrier)-SH + AH2 + 2 S-adenosyl-L-methionine = 2-methylsulfanyl-N(6)-dimethylallyladenosine(37) in tRNA + (sulfur carrier)-H + 5'-deoxyadenosine + L-methionine + A + S-adenosyl-L-homocysteine + 2 H(+). Its function is as follows. Catalyzes the methylthiolation of N6-(dimethylallyl)adenosine (i(6)A), leading to the formation of 2-methylthio-N6-(dimethylallyl)adenosine (ms(2)i(6)A) at position 37 in tRNAs that read codons beginning with uridine. The polypeptide is tRNA-2-methylthio-N(6)-dimethylallyladenosine synthase (Shewanella baltica (strain OS185)).